Consider the following 635-residue polypeptide: Sodium- and chloride-dependent creatine transporter 1 (635 aa).

Residues 1–35 (MAKKSAENGIYSVSGDEKKGPLIAPGPDGAPAKGD) are disordered. Residues 1–60 (MAKKSAENGIYSVSGDEKKGPLIAPGPDGAPAKGDGPAGLGAPGGCLAVPPRETWTRQMD) lie on the Cytoplasmic side of the membrane. The span at 25-35 (PGPDGAPAKGD) shows a compositional bias: low complexity. Residues 61 to 81 (FIMSCVGFAVGLGNVWRFPYL) traverse the membrane as a helical segment. Residues 82 to 87 (CYKNGG) are Extracellular-facing. The helical transmembrane segment at 88–108 (GVFLIPYVLIALVGGIPIFFL) threads the bilayer. The Cytoplasmic segment spans residues 109–138 (EISLGQFMKAGSINVWNICPLFKGLGYASM). Residues 139 to 159 (VIVFYCNTYYIMVLAWGFYYL) form a helical membrane-spanning segment. Topologically, residues 160–230 (VKSFTTTLPW…LSGGLEVPGA (71 aa)) are extracellular. N-linked (GlcNAc...) asparagine glycosylation is found at asparagine 192 and asparagine 197. Residues 231 to 251 (LNSEVTLCLLACWVLVYFCVW) traverse the membrane as a helical segment. Over 252–269 (KGVKSTGKIVYFTATFPY) the chain is Cytoplasmic. Residues 270-290 (VVLVVLLVRGVLLPGALDGII) traverse the membrane as a helical segment. The Extracellular portion of the chain corresponds to 291–304 (YYLKPDWSKLRSPQ). Residues 305 to 325 (VWIDAGTQIFFSYAIGLGALT) form a helical membrane-spanning segment. The Cytoplasmic segment spans residues 326–341 (ALGSYNRFNNNCYKDA). Residues 342–362 (IILALINSGTSFFAGFVVFSI) traverse the membrane as a helical segment. Residues 363–394 (LGFMATEQGVHISKVAESGPGLAFIAYPRAVT) are Extracellular-facing. Residues 395–415 (LMPVAPLWAALFFFMLLLLGL) traverse the membrane as a helical segment. Residues 416–444 (DSQFVGVEGFITGLLDLLPASYYFRFQRE) are Cytoplasmic-facing. A helical transmembrane segment spans residues 445–465 (ISVALCCALCFVIDLSMVQMA). Topologically, residues 466–479 (GMYVFQLFDYYSAS) are extracellular. Residues 480–500 (GTTLLWQAFWECVAVAWVYGA) traverse the membrane as a helical segment. Over 501–520 (DRFMDDIACMIGYRPCPWMK) the chain is Cytoplasmic. The helical transmembrane segment at 521-541 (WCWSFFTPLVCMGIFIFNIVY) threads the bilayer. Residues 542-560 (YKPLVYNKTYVYPWWGEAM) lie on the Extracellular side of the membrane. The N-linked (GlcNAc...) asparagine glycan is linked to asparagine 548. A helical transmembrane segment spans residues 561-581 (GWAFALSSMLCVPLHLLGCLL). Topologically, residues 582–635 (RAKGTMAERWQHLTQPVWGLHHLEYRAQDADVRGLTTLTPVSESSKVVVVESVM) are cytoplasmic. Phosphothreonine occurs at positions 617 and 620. At serine 623 the chain carries Phosphoserine.

The protein belongs to the sodium:neurotransmitter symporter (SNF) (TC 2.A.22) family. SLC6A8 subfamily. Post-translationally, glycosylated. In terms of tissue distribution, prominent in kidney, heart, and muscle, also present in brain, but not in liver and intestine.

It localises to the cell membrane. It is found in the apical cell membrane. It carries out the reaction creatine(out) + chloride(out) + 2 Na(+)(out) = creatine(in) + chloride(in) + 2 Na(+)(in). In terms of biological role, creatine:sodium symporter which mediates the uptake of creatine. Plays an important role in supplying creatine to the brain via the blood-brain barrier. The protein is Sodium- and chloride-dependent creatine transporter 1 (SLC6A8) of Oryctolagus cuniculus (Rabbit).